Reading from the N-terminus, the 190-residue chain is Guanylate kinase (190 aa).

The region spanning Gly-8 to Leu-188 is the Guanylate kinase-like domain. An ATP-binding site is contributed by Gly-15 to Ser-22.

This sequence belongs to the guanylate kinase family.

It localises to the cytoplasm. The catalysed reaction is GMP + ATP = GDP + ADP. Functionally, essential for recycling GMP and indirectly, cGMP. The chain is Guanylate kinase from Corynebacterium efficiens (strain DSM 44549 / YS-314 / AJ 12310 / JCM 11189 / NBRC 100395).